The chain runs to 155 residues: Large ribosomal subunit protein uL16 (155 aa).

This sequence belongs to the universal ribosomal protein uL16 family. In terms of assembly, part of the 50S ribosomal subunit.

In terms of biological role, binds 23S rRNA and is also seen to make contacts with the A and possibly P site tRNAs. This chain is Large ribosomal subunit protein uL16, found in Synechococcus sp. (strain CC9311).